We begin with the raw amino-acid sequence, 202 residues long: Phosphatidyl-N-methylethanolamine N-methyltransferase (202 aa).

Residues 1 to 12 (MTTLSDYVDFSQ) lie on the Lumenal side of the membrane. An intramembrane region (helical) is located at residues 13–33 (DSFKYAALSIAFNPIFWNVVA). The Lumenal segment spans residues 34 to 45 (RAEYRSHFLTRI). A helical transmembrane segment spans residues 46–66 (FGSPYRGCYFLAITIFSLGIL). Over 67–90 (RDHIYQQALEDQPYYAPVHQPVLG) the chain is Cytoplasmic. A helical membrane pass occupies residues 91–111 (GALFAVGSVLVLSSMYALGVT). 95 to 97 (AVG) is an S-adenosyl-L-methionine binding site. Topologically, residues 112–154 (GTYLGDYFGILMDAPVTGFPFNVTGSPMYWGSTLNFLGVALYK) are lumenal. A helical transmembrane segment spans residues 155-175 (GKVAGILLTALVFVLYWFALK). Residues 176-202 (WEDPFTAEIYAKRERERAKSKRGGKNQ) are Cytoplasmic-facing. 177 to 178 (ED) is a binding site for S-adenosyl-L-methionine.

This sequence belongs to the class VI-like SAM-binding methyltransferase superfamily. PEMT/PEM2 methyltransferase family.

It is found in the endoplasmic reticulum membrane. It localises to the mitochondrion membrane. It catalyses the reaction a 1,2-diacyl-sn-glycero-3-phospho-N-methylethanolamine + S-adenosyl-L-methionine = a 1,2-diacyl-sn-glycero-3-phospho-N,N-dimethylethanolamine + S-adenosyl-L-homocysteine + H(+). The catalysed reaction is a 1,2-diacyl-sn-glycero-3-phospho-N,N-dimethylethanolamine + S-adenosyl-L-methionine = a 1,2-diacyl-sn-glycero-3-phosphocholine + S-adenosyl-L-homocysteine + H(+). It functions in the pathway phospholipid metabolism; phosphatidylcholine biosynthesis. Functionally, catalyzes the second two steps of the methylation pathway of phosphatidylcholine biosynthesis, the SAM-dependent methylation of phosphatidylmonomethylethanolamine (PMME) to phosphatidyldimethylethanolamine (PDME) and of PDME to phosphatidylcholine (PC). The chain is Phosphatidyl-N-methylethanolamine N-methyltransferase from Emericella nidulans (strain FGSC A4 / ATCC 38163 / CBS 112.46 / NRRL 194 / M139) (Aspergillus nidulans).